Consider the following 242-residue polypeptide: Probable 2-phosphosulfolactate phosphatase (242 aa).

Belongs to the ComB family. Requires Mg(2+) as cofactor.

It catalyses the reaction (2R)-O-phospho-3-sulfolactate + H2O = (2R)-3-sulfolactate + phosphate. The chain is Probable 2-phosphosulfolactate phosphatase from Prochlorococcus marinus (strain NATL1A).